The chain runs to 191 residues: Adenylate kinase (191 aa).

Residue 9-17 coordinates ATP; that stretch reads GVPGVGATT.

This sequence belongs to the archaeal adenylate kinase family.

The protein resides in the cytoplasm. It catalyses the reaction AMP + ATP = 2 ADP. This chain is Adenylate kinase, found in Methanopyrus kandleri (strain AV19 / DSM 6324 / JCM 9639 / NBRC 100938).